The following is a 437-amino-acid chain: Enolase (437 aa).

(2R)-2-phosphoglycerate is bound at residue Q162. Catalysis depends on E204, which acts as the Proton donor. Residues D251, E297, and D324 each contribute to the Mg(2+) site. K349, R378, S379, and K400 together coordinate (2R)-2-phosphoglycerate. K349 (proton acceptor) is an active-site residue.

The protein belongs to the enolase family. Mg(2+) serves as cofactor.

It localises to the cytoplasm. The protein localises to the secreted. It is found in the cell surface. The enzyme catalyses (2R)-2-phosphoglycerate = phosphoenolpyruvate + H2O. Its pathway is carbohydrate degradation; glycolysis; pyruvate from D-glyceraldehyde 3-phosphate: step 4/5. In terms of biological role, catalyzes the reversible conversion of 2-phosphoglycerate (2-PG) into phosphoenolpyruvate (PEP). It is essential for the degradation of carbohydrates via glycolysis. This Chlorobium chlorochromatii (strain CaD3) protein is Enolase.